The following is a 575-amino-acid chain: Arginine--tRNA ligase (575 aa).

The short motif at Ala-130 to His-140 is the 'HIGH' region element.

Belongs to the class-I aminoacyl-tRNA synthetase family. As to quaternary structure, monomer.

The protein localises to the cytoplasm. The catalysed reaction is tRNA(Arg) + L-arginine + ATP = L-arginyl-tRNA(Arg) + AMP + diphosphate. The polypeptide is Arginine--tRNA ligase (Magnetococcus marinus (strain ATCC BAA-1437 / JCM 17883 / MC-1)).